A 433-amino-acid polypeptide reads, in one-letter code: Glutamate-1-semialdehyde 2,1-aminomutase (433 aa).

Lys273 carries the N6-(pyridoxal phosphate)lysine modification.

The protein belongs to the class-III pyridoxal-phosphate-dependent aminotransferase family. HemL subfamily. Homodimer. The cofactor is pyridoxal 5'-phosphate.

The protein localises to the cytoplasm. It catalyses the reaction (S)-4-amino-5-oxopentanoate = 5-aminolevulinate. The protein operates within porphyrin-containing compound metabolism; protoporphyrin-IX biosynthesis; 5-aminolevulinate from L-glutamyl-tRNA(Glu): step 2/2. The protein is Glutamate-1-semialdehyde 2,1-aminomutase of Polynucleobacter necessarius subsp. necessarius (strain STIR1).